The chain runs to 878 residues: DNA mismatch repair protein MutS (878 aa).

626-633 provides a ligand contact to ATP; the sequence is GPNMAGKS.

This sequence belongs to the DNA mismatch repair MutS family.

Its function is as follows. This protein is involved in the repair of mismatches in DNA. It is possible that it carries out the mismatch recognition step. This protein has a weak ATPase activity. The chain is DNA mismatch repair protein MutS from Paracoccus denitrificans (strain Pd 1222).